The sequence spans 218 residues: Ras-related protein RABA1h (218 aa).

Residue 20–27 coordinates GTP; sequence GDSGVGKS. Residues 42 to 50 carry the Effector region motif; sequence SRSTIGVEF. Residues 68 to 72, 126 to 129, and 156 to 157 contribute to the GTP site; these read DTAGQ, NKAD, and SA. S-geranylgeranyl cysteine attachment occurs at residues C215 and C216.

This sequence belongs to the small GTPase superfamily. Rab family.

Its subcellular location is the cell membrane. Functionally, intracellular vesicle trafficking and protein transport. The chain is Ras-related protein RABA1h (RABA1H) from Arabidopsis thaliana (Mouse-ear cress).